The primary structure comprises 83 residues: Kunitz serine protease inhibitor Pr-mulgin 1 (83 aa).

The N-terminal stretch at 1 to 24 is a signal peptide; it reads MSSGGLLLLLGLLTLWEVLTPVSS. In terms of domain architecture, BPTI/Kunitz inhibitor spans 31–81; that stretch reads CELPADPGPCNGLFQAFYYNPVQRKCLKFRYGGCKGNPNTFKTIEECKRTC. 3 cysteine pairs are disulfide-bonded: C31–C81, C40–C64, and C56–C77.

The protein belongs to the venom Kunitz-type family. Expressed by the venom gland.

It localises to the secreted. In terms of biological role, specifically inhibits MMP2 activity (EC(50)=100 nM and Ki=60 nM). This chain is Kunitz serine protease inhibitor Pr-mulgin 1, found in Pseudechis rossignolii (Papuan pigmy mulga snake).